Reading from the N-terminus, the 372-residue chain is tRNA-specific 2-thiouridylase MnmA (372 aa).

ATP contacts are provided by residues 16 to 23 and Met-42; that span reads GMSGGVDS. An interaction with target base in tRNA region spans residues 102-104; that stretch reads NPD. The Nucleophile role is filled by Cys-107. Cys-107 and Cys-205 are oxidised to a cystine. An ATP-binding site is contributed by Gly-132. The segment at 155–157 is interaction with tRNA; that stretch reads KDQ. The active-site Cysteine persulfide intermediate is Cys-205. The interval 317-318 is interaction with tRNA; that stretch reads RY.

It belongs to the MnmA/TRMU family.

Its subcellular location is the cytoplasm. The enzyme catalyses S-sulfanyl-L-cysteinyl-[protein] + uridine(34) in tRNA + AH2 + ATP = 2-thiouridine(34) in tRNA + L-cysteinyl-[protein] + A + AMP + diphosphate + H(+). In terms of biological role, catalyzes the 2-thiolation of uridine at the wobble position (U34) of tRNA, leading to the formation of s(2)U34. The polypeptide is tRNA-specific 2-thiouridylase MnmA (Shewanella sp. (strain MR-7)).